We begin with the raw amino-acid sequence, 561 residues long: Cytochrome P450 monooxygenase iboC (561 aa).

The chain crosses the membrane as a helical span at residues 8–28 (RFYYQLLAAVLIPALFVAWAA). Cys-484 contacts heme.

The protein belongs to the cytochrome P450 family. It depends on heme as a cofactor.

The protein resides in the membrane. It participates in secondary metabolite biosynthesis. In terms of biological role, cytochrome P450 monooxygenase; part of the gene cluster that mediates the biosynthesis of the psychoactive metabolites ibotenic acid and muscimol. The first committed step is glutamate hydroxylation by the 2-oxoglutarate-dependent dioxygenase iboH, and the last step is decarboxylation of ibotenic acid to muscimol by the decarboxylase iboD. The order of the intermediate reactions is somewhat ambiguous. IboA likely activates the carboxylic acid at position 5 to introduce an amide bond, and the flavin monooxygenase iboF generates the N-O bond. There are several options for the latter step. One option is that iboF directly hydroxylates the amide nitrogen formed by iboA to produce a hydroxamic acid species. Another option is that iboF hydroxylates an external N-containing compound, whose resulting N-O bond is subsequently introduced into the hydroxyglutamate scaffold. The paralogous PLP-dependent cystathionine gamma-synthase-like enzymes iboG1 and iboG2 are likely involved in substitution of the OH group at position 3 by the O-N moiety. The first cyclic intermediate is most probably tricholomic acid which is likely desaturated to ibotenic acid by the cytochrome P450 monooxygenase iboC. The polypeptide is Cytochrome P450 monooxygenase iboC (Amanita muscaria (strain Koide BX008)).